A 581-amino-acid polypeptide reads, in one-letter code: Zinc finger protein 319 (581 aa).

Low complexity predominate over residues 1–22; the sequence is MSESWQQPPQTQPQQPQAPQPQ. The disordered stretch occupies residues 1–39; the sequence is MSESWQQPPQTQPQQPQAPQPQHHAETPPALAEHTLPPG. A C2H2-type 1 zinc finger spans residues 75-99; sequence PKCGVCGHDLAHLSSPHEHQCLAGH. Residues 103–125 form a C2H2-type 2; degenerate zinc finger; that stretch reads FQCTQCLKIFHQATDLLEHQCVQ. K129 is covalently cross-linked (Glycyl lysine isopeptide (Lys-Gly) (interchain with G-Cter in SUMO2)). C2H2-type zinc fingers lie at residues 131-153, 201-223, 229-251, and 257-279; these read FVCGVCKMGFSLLTSLAQHHSSH, YSCPVCQKPFKHLSELSRHERIH, YKCTLCDKSFSQSSHLVHHKRTH, and YKCAVCEKTFKHRSHLVRHMYAH. The residue at position 280 (S280) is a Phosphoserine. The C2H2-type 7; degenerate zinc finger occupies 286–308; it reads FRCNVCELHFKESSELLQHPCTP. C2H2-type zinc fingers lie at residues 314–336, 342–364, and 370–392; these read FRCGECQKAFKRPSDLRQHERTH, FKCDLCPMGFKQQYALMRHRRTH, and FKCGLCEKGFGQPSHLLYHQHVH. The C2H2-type 11; degenerate zinc-finger motif lies at 398 to 420; that stretch reads FKCPVCQKGFDQSAELLRHKCLP. The C2H2-type 12 zinc-finger motif lies at 427 to 449; sequence FKCPVCNKAYKRASALQKHQLSH. The C2H2-type 13; degenerate zinc-finger motif lies at 457–479; sequence LRCTLCERRFFSSSEFVQHRCDP. C2H2-type zinc fingers lie at residues 485-507, 513-535, and 541-563; these read LKCPDCEKRFKYASDLQRHRRVH, YKCPSCDKAFKQREHLNKHQGVH, and FKCVWCGERFLDVALLQEHSAQH.

This sequence belongs to the krueppel C2H2-type zinc-finger protein family.

The protein localises to the nucleus. Functionally, may be involved in transcriptional regulation. This Mus musculus (Mouse) protein is Zinc finger protein 319 (Znf319).